We begin with the raw amino-acid sequence, 592 residues long: Transducer of Cdc42-dependent actin assembly protein 1 homolog (592 aa).

Positions Asp-3–Asp-267 constitute an F-BAR domain. Disordered regions lie at residues Phe-343–Ala-366 and Ser-447–Tyr-519. In terms of domain architecture, REM-1 spans Thr-359–Asp-436. A coiled-coil region spans residues Gln-363–Leu-441. Residues Ser-447–Pro-457 show a composition bias toward polar residues. The span at Ser-459–Val-474 shows a compositional bias: low complexity. The segment covering Phe-495–Gly-510 has biased composition (polar residues). In terms of domain architecture, SH3 spans Pro-527–Phe-589.

Belongs to the FNBP1 family. As to quaternary structure, interacts (via SH3 domain) with wsp-1. Interacts with cdc-42 and (via SH3 domain) with wve-1. As to expression, expressed in the germline and specifically in the gonads.

The protein resides in the cell junction. The protein localises to the apical cell membrane. It is found in the basolateral cell membrane. It localises to the cytoplasmic vesicle. Its subcellular location is the cytoplasm. The protein resides in the perinuclear region. The protein localises to the recycling endosome. Its function is as follows. Plays a role in protein trafficking, actin organization and embryonic morphogenesis. Potentially acts as a cdc-42 effector. May play a role in hypodermal P-cell nuclear positioning. Together with toca-2, is required for protein trafficking regulating yolk protein clathrin-mediated endocytosis by oocytes during oogenesis and retrograde recycling and the sorting of recycling endosome cargo proteins such as mig-14. Also, together with toca-2, controls the distribution of actin at cell junctions. This Caenorhabditis elegans protein is Transducer of Cdc42-dependent actin assembly protein 1 homolog.